Reading from the N-terminus, the 245-residue chain is Carboxy-S-adenosyl-L-methionine synthase (245 aa).

S-adenosyl-L-methionine is bound by residues Tyr-42, 67–69, 92–93, 120–121, Asn-135, and Arg-202; these read GCS, DN, and DI.

Belongs to the class I-like SAM-binding methyltransferase superfamily. Cx-SAM synthase family. As to quaternary structure, homodimer.

The catalysed reaction is prephenate + S-adenosyl-L-methionine = carboxy-S-adenosyl-L-methionine + 3-phenylpyruvate + H2O. Its function is as follows. Catalyzes the conversion of S-adenosyl-L-methionine (SAM) to carboxy-S-adenosyl-L-methionine (Cx-SAM). This is Carboxy-S-adenosyl-L-methionine synthase from Vibrio campbellii (strain ATCC BAA-1116).